Reading from the N-terminus, the 386-residue chain is MKHSATSSEAHARATWPLPEPTLAYFPNARFVPSDRDLDAGAARPIRGGVAVVDDSPDFGHVPVLLERCVELLTPALTRRHPDGSGAVLLDATLGAGGHAERFLTDLPGLRLIALDRDPSALEIARERLARFADRITLVHTRYDGIAAALTESGYAATESVDGILFDLGVSSMQLDRPERGFAYAQDAPLDMRMDPGSPLTAADILNTYDEAELADILHRYGEERFARRIAAQIVRRRAKEPFTSTADLVSLLYQAIPAPARRTGGHPAKRTFQALRIAVNDELDTLRCALPAALDALAVDGRIVVLAYQSLEDRIVKRLFAQAVASRTPVDLPVELPGHEPRFRALTHGAGRADAAEIERNPRSAAVRLRALQRTQAPQATGKGD.

S-adenosyl-L-methionine-binding positions include 97–99, Asp116, Tyr143, Asp167, and Gln174; that span reads GGH.

It belongs to the methyltransferase superfamily. RsmH family.

The protein localises to the cytoplasm. It carries out the reaction cytidine(1402) in 16S rRNA + S-adenosyl-L-methionine = N(4)-methylcytidine(1402) in 16S rRNA + S-adenosyl-L-homocysteine + H(+). In terms of biological role, specifically methylates the N4 position of cytidine in position 1402 (C1402) of 16S rRNA. The protein is Ribosomal RNA small subunit methyltransferase H of Mycobacterium avium (strain 104).